Consider the following 979-residue polypeptide: Oncostatin-M-specific receptor subunit beta (979 aa).

The N-terminal stretch at 1–27 (MALFAVFQTTFFLTLLSLRTYQSEVLA) is a signal peptide. Topologically, residues 28–740 (ERLPLTPVSL…VTTPDEHSSM (713 aa)) are extracellular. Asn163 carries N-linked (GlcNAc...) asparagine glycosylation. Cys245 and Cys255 are oxidised to a cystine. Residues Asn326 and Asn380 are each glycosylated (N-linked (GlcNAc...) asparagine). Fibronectin type-III domains follow at residues 335–428 (NPFS…TLEA), 433–528 (APDV…DPEN), 529–623 (KEVE…SQEL), and 625–736 (PSDN…TPDE). The short motif at 415-419 (WSEWS) is the WSXWS motif element. Residues Asn446 and Asn580 are each glycosylated (N-linked (GlcNAc...) asparagine). The helical transmembrane segment at 741–761 (LIHILLPMVFCVLLIMVMCYL) threads the bilayer. The Cytoplasmic segment spans residues 762-979 (KSQWIKETCY…TLLDPGEHYC (218 aa)). A Box 1 motif motif is present at residues 770–778 (CYPDIPDPY). Residues Ser826 and Ser889 each carry the phosphoserine modification.

This sequence belongs to the type I cytokine receptor family. Type 2 subfamily. As to quaternary structure, heterodimer composed of OSMR and IL6ST (type II OSM receptor). Heterodimer with IL31RA to form the IL31 receptor. As to expression, expressed in keratinocytes (at protein level). Expressed at relatively high levels in all neural cells as well as fibroblast and epithelial cells.

The protein localises to the membrane. Functionally, associates with IL31RA to form the IL31 receptor. Binds IL31 to activate STAT3 and possibly STAT1 and STAT5. Capable of transducing OSM-specific signaling events. The sequence is that of Oncostatin-M-specific receptor subunit beta (OSMR) from Homo sapiens (Human).